The primary structure comprises 461 residues: Protein KlcB (461 aa).

2 disordered regions span residues 84–107 and 349–379; these read PEAT…TEDK and RAKA…EDAP. Residues 91–101 show a composition bias toward basic residues; the sequence is ARRRTKARKSK. Positions 357–377 are enriched in basic and acidic residues; sequence GQRREPVTPAKPEPEPAKDED.

In Escherichia coli, this protein is Protein KlcB (klcB).